The following is a 338-amino-acid chain: Methionine aminopeptidase 1D, mitochondrial (338 aa).

Residues 1–47 (MAAPCAAQCLYRTGGLRLLQRISRLPHCHKDASLAHQCQFHRSFFWR) constitute a mitochondrion transit peptide. His-164 lines the substrate pocket. 3 residues coordinate a divalent metal cation: Asp-181, Asp-192, and His-255. A substrate-binding site is contributed by His-262. Positions 287 and 318 each coordinate a divalent metal cation.

Belongs to the peptidase M24A family. Methionine aminopeptidase type 1 subfamily. Co(2+) is required as a cofactor. The cofactor is Zn(2+). It depends on Mn(2+) as a cofactor. Requires Fe(2+) as cofactor.

The protein localises to the mitochondrion. It catalyses the reaction Release of N-terminal amino acids, preferentially methionine, from peptides and arylamides.. Functionally, removes the N-terminal methionine from nascent proteins. The N-terminal methionine is often cleaved when the second residue in the primary sequence is small and uncharged (Met-Ala-, Cys, Gly, Pro, Ser, Thr, or Val). Requires deformylation of the N(alpha)-formylated initiator methionine before it can be hydrolyzed. The protein is Methionine aminopeptidase 1D, mitochondrial (metap1d) of Danio rerio (Zebrafish).